Here is a 242-residue protein sequence, read N- to C-terminus: Prosalusin (242 aa).

The first 26 residues, 1 to 26 (MAAATRSCRPWGSLLGLIWLVSAAAA), serve as a signal peptide directing secretion. A propeptide spanning residues 27–189 (SWDLSSLRCN…SSWVVYGTNY (163 aa)) is cleaved from the precursor. 93 to 100 (GWTGTGKS) lines the ATP pocket. The N-linked (GlcNAc...) asparagine glycan is linked to N149.

It belongs to the ClpA/ClpB family. Torsin subfamily.

The protein resides in the secreted. Its function is as follows. Salusin may be a endocrine and/or paracrine factor able to increase intracellular calcium concentrations and induce cell mitogenesis. Salusin may also be a potent hypotensive peptide. This is Prosalusin (TOR2A) from Bos taurus (Bovine).